The following is a 565-amino-acid chain: Berberine bridge enzyme-like C-2 (565 aa).

Positions 1-17 (MFPIIILISFSFTFLFA) are cleaved as a signal peptide. N-linked (GlcNAc...) asparagine glycosylation is found at Asn-28 and Asn-40. Cys-32 and Cys-94 are disulfide-bonded. The FAD-binding PCMH-type domain occupies 72-248 (YMPKPTVIIL…YAWKIRLLKV (177 aa)). Position 109 is a pros-8alpha-FAD histidine (His-109). N-linked (GlcNAc...) asparagine glycosylation is found at Asn-363 and Asn-502.

The protein belongs to the oxygen-dependent FAD-linked oxidoreductase family. FAD is required as a cofactor.

Its subcellular location is the vacuole. The protein operates within alkaloid biosynthesis; nicotine biosynthesis. Functionally, involved in the biosynthesis of pyridine alkaloid natural products, leading mainly to the production of anabasine, anatabine, nicotine and nornicotine, effective deterrents against herbivores with antiparasitic and pesticide properties (neurotoxins); nornicotine serves as the precursor in the synthesis of the carcinogen compound N'-nitrosonornicotine (NNN). Catalyzes a late oxidation step subsequent to the pyridine ring condensation reaction in the biosynthesis of alkaloids. This Nicotiana tabacum (Common tobacco) protein is Berberine bridge enzyme-like C-2.